A 170-amino-acid chain; its full sequence is Crossover junction endodeoxyribonuclease RuvC (170 aa).

Active-site residues include aspartate 12, glutamate 72, and aspartate 144. Mg(2+) is bound by residues aspartate 12, glutamate 72, and aspartate 144.

Belongs to the RuvC family. In terms of assembly, homodimer which binds Holliday junction (HJ) DNA. The HJ becomes 2-fold symmetrical on binding to RuvC with unstacked arms; it has a different conformation from HJ DNA in complex with RuvA. In the full resolvosome a probable DNA-RuvA(4)-RuvB(12)-RuvC(2) complex forms which resolves the HJ. Mg(2+) is required as a cofactor.

The protein resides in the cytoplasm. It carries out the reaction Endonucleolytic cleavage at a junction such as a reciprocal single-stranded crossover between two homologous DNA duplexes (Holliday junction).. Functionally, the RuvA-RuvB-RuvC complex processes Holliday junction (HJ) DNA during genetic recombination and DNA repair. Endonuclease that resolves HJ intermediates. Cleaves cruciform DNA by making single-stranded nicks across the HJ at symmetrical positions within the homologous arms, yielding a 5'-phosphate and a 3'-hydroxyl group; requires a central core of homology in the junction. The consensus cleavage sequence is 5'-(A/T)TT(C/G)-3'. Cleavage occurs on the 3'-side of the TT dinucleotide at the point of strand exchange. HJ branch migration catalyzed by RuvA-RuvB allows RuvC to scan DNA until it finds its consensus sequence, where it cleaves and resolves the cruciform DNA. The sequence is that of Crossover junction endodeoxyribonuclease RuvC from Nitrobacter hamburgensis (strain DSM 10229 / NCIMB 13809 / X14).